We begin with the raw amino-acid sequence, 374 residues long: MKISVSKNDLENALRYLQAFLDKKDASSIASHIHLEVIKEKLFLKASDSDIGLKSYIFTQSSDKEGVGTINGKKFLDIISCLKDSNIILETKDDSLAIKQNKSSFKLPMFDADEFPEFPVIDPKVSIEVNAPFLVDAFKKIAPVIEQTSHKRELAGILMQFDQKHQTLSVVGTDTKRLSYTQLEKISIHSTEEDISCILPKRALLEILKLFYENFSFKSDGMLAVIENEMHTFFTKLIDGNYPDYQKILPKEYISSFTLGKEEFKESIKLCSSLSSTIKLTLEKNNALFESLDSEHSETAKTSVEIEKGLDIEKAFHLGVNAKFFLEALNALGTTQFVLRCNEPSSPFLIQESLDEKQSHLNAKISTLMMPITL.

The protein belongs to the beta sliding clamp family. As to quaternary structure, forms a ring-shaped head-to-tail homodimer around DNA which binds and tethers DNA polymerases and other proteins to the DNA. The DNA replisome complex has a single clamp-loading complex (3 tau and 1 each of delta, delta', psi and chi subunits) which binds 3 Pol III cores (1 core on the leading strand and 2 on the lagging strand) each with a beta sliding clamp dimer. Additional proteins in the replisome are other copies of gamma, psi and chi, Ssb, DNA helicase and RNA primase.

The protein resides in the cytoplasm. Its function is as follows. Confers DNA tethering and processivity to DNA polymerases and other proteins. Acts as a clamp, forming a ring around DNA (a reaction catalyzed by the clamp-loading complex) which diffuses in an ATP-independent manner freely and bidirectionally along dsDNA. Initially characterized for its ability to contact the catalytic subunit of DNA polymerase III (Pol III), a complex, multichain enzyme responsible for most of the replicative synthesis in bacteria; Pol III exhibits 3'-5' exonuclease proofreading activity. The beta chain is required for initiation of replication as well as for processivity of DNA replication. The sequence is that of Beta sliding clamp (dnaN) from Helicobacter pylori (strain ATCC 700392 / 26695) (Campylobacter pylori).